Consider the following 137-residue polypeptide: Small ribosomal subunit protein uS12 (137 aa).

A 3-methylthioaspartic acid modification is found at Asp89. Positions 104–137 are disordered; the sequence is TAGVNGRKQSRSKYGAKRPKPGQAAAAPAKGKKK. Over residues 111–123 the composition is skewed to basic residues; that stretch reads KQSRSKYGAKRPK. The span at 124–137 shows a compositional bias: low complexity; it reads PGQAAAAPAKGKKK.

The protein belongs to the universal ribosomal protein uS12 family. As to quaternary structure, part of the 30S ribosomal subunit. Contacts proteins S8 and S17. May interact with IF1 in the 30S initiation complex.

Functionally, with S4 and S5 plays an important role in translational accuracy. In terms of biological role, interacts with and stabilizes bases of the 16S rRNA that are involved in tRNA selection in the A site and with the mRNA backbone. Located at the interface of the 30S and 50S subunits, it traverses the body of the 30S subunit contacting proteins on the other side and probably holding the rRNA structure together. The combined cluster of proteins S8, S12 and S17 appears to hold together the shoulder and platform of the 30S subunit. This chain is Small ribosomal subunit protein uS12, found in Cytophaga hutchinsonii (strain ATCC 33406 / DSM 1761 / CIP 103989 / NBRC 15051 / NCIMB 9469 / D465).